The following is a 130-amino-acid chain: Small ribosomal subunit protein uS11 (130 aa).

The protein belongs to the universal ribosomal protein uS11 family. Part of the 30S ribosomal subunit. Interacts with proteins S7 and S18. Binds to IF-3.

Located on the platform of the 30S subunit, it bridges several disparate RNA helices of the 16S rRNA. Forms part of the Shine-Dalgarno cleft in the 70S ribosome. In Campylobacter hominis (strain ATCC BAA-381 / DSM 21671 / CCUG 45161 / LMG 19568 / NCTC 13146 / CH001A), this protein is Small ribosomal subunit protein uS11.